A 235-amino-acid chain; its full sequence is 2-C-methyl-D-erythritol 4-phosphate cytidylyltransferase (235 aa).

Belongs to the IspD/TarI cytidylyltransferase family. IspD subfamily.

It carries out the reaction 2-C-methyl-D-erythritol 4-phosphate + CTP + H(+) = 4-CDP-2-C-methyl-D-erythritol + diphosphate. Its pathway is isoprenoid biosynthesis; isopentenyl diphosphate biosynthesis via DXP pathway; isopentenyl diphosphate from 1-deoxy-D-xylulose 5-phosphate: step 2/6. In terms of biological role, catalyzes the formation of 4-diphosphocytidyl-2-C-methyl-D-erythritol from CTP and 2-C-methyl-D-erythritol 4-phosphate (MEP). This is 2-C-methyl-D-erythritol 4-phosphate cytidylyltransferase from Pseudomonas putida (strain GB-1).